Here is a 249-residue protein sequence, read N- to C-terminus: Aquaporin TIP4-3 (249 aa).

2 consecutive transmembrane segments (helical) span residues Gly20 to Met40 and Thr56 to Ile76. The NPA 1 signature appears at Asn82–Ala84. 3 helical membrane-spanning segments follow: residues Ser100–Thr122, Gly141–Leu161, and Gly169–Leu189. The NPA 2 motif lies at Asn195–Ala197. Residues Val214–Phe234 traverse the membrane as a helical segment.

The protein belongs to the MIP/aquaporin (TC 1.A.8) family. TIP (TC 1.A.8.10) subfamily.

Its subcellular location is the vacuole membrane. In terms of biological role, aquaporins facilitate the transport of water and small neutral solutes across cell membranes. The sequence is that of Aquaporin TIP4-3 (TIP4-3) from Zea mays (Maize).